We begin with the raw amino-acid sequence, 213 residues long: Receptor-binding cancer antigen expressed on SiSo cells (213 aa).

Over 1–6 (MAITQF) the chain is Extracellular. A helical; Signal-anchor for type III membrane protein membrane pass occupies residues 7-27 (RLFKFCTCLATVFSFLKRLIC). Residues 28-213 (RSGRGRKLSG…EQNKIGVKLS (186 aa)) lie on the Cytoplasmic side of the membrane. Position 36 is a phosphoserine (Ser-36). A Phosphothreonine modification is found at Thr-41. At Tyr-94 the chain carries Phosphotyrosine. The stretch at 163-211 (EDAAWQAEEVLRQQKLADREKRAAEQQRKKMEKEAQRLMKKEQNKIGVK) forms a coiled coil. Residues 178 to 206 (LADREKRAAEQQRKKMEKEAQRLMKKEQN) show a composition bias toward basic and acidic residues. Residues 178–213 (LADREKRAAEQQRKKMEKEAQRLMKKEQNKIGVKLS) are disordered.

Homodimer. Widely expressed. Expressed in ovary, testis, prostate, thymus, muscle and heart, but not in small intestine, colon, lymph nodes, or peripherical blood lymphocytes. The protein is not detected in any of the above organs.

The protein resides in the golgi apparatus membrane. Functionally, may participate in suppression of cell proliferation and induces apoptotic cell death through activation of interleukin-1-beta converting enzyme (ICE)-like proteases. This chain is Receptor-binding cancer antigen expressed on SiSo cells (EBAG9), found in Homo sapiens (Human).